Reading from the N-terminus, the 156-residue chain is ATP synthase subunit b (156 aa).

Residues 5–27 form a helical membrane-spanning segment; the sequence is ITLIGQMITFAIFIGFTMKFVWP.

Belongs to the ATPase B chain family. As to quaternary structure, F-type ATPases have 2 components, F(1) - the catalytic core - and F(0) - the membrane proton channel. F(1) has five subunits: alpha(3), beta(3), gamma(1), delta(1), epsilon(1). F(0) has three main subunits: a(1), b(2) and c(10-14). The alpha and beta chains form an alternating ring which encloses part of the gamma chain. F(1) is attached to F(0) by a central stalk formed by the gamma and epsilon chains, while a peripheral stalk is formed by the delta and b chains.

It is found in the cell inner membrane. F(1)F(0) ATP synthase produces ATP from ADP in the presence of a proton or sodium gradient. F-type ATPases consist of two structural domains, F(1) containing the extramembraneous catalytic core and F(0) containing the membrane proton channel, linked together by a central stalk and a peripheral stalk. During catalysis, ATP synthesis in the catalytic domain of F(1) is coupled via a rotary mechanism of the central stalk subunits to proton translocation. In terms of biological role, component of the F(0) channel, it forms part of the peripheral stalk, linking F(1) to F(0). The sequence is that of ATP synthase subunit b from Francisella tularensis subsp. holarctica (strain OSU18).